Reading from the N-terminus, the 160-residue chain is Cyclic pyranopterin monophosphate synthase (160 aa).

Substrate contacts are provided by residues 74-76 and 112-113; these read LSH and ME. Asp127 is an active-site residue.

This sequence belongs to the MoaC family. As to quaternary structure, homohexamer; trimer of dimers.

It carries out the reaction (8S)-3',8-cyclo-7,8-dihydroguanosine 5'-triphosphate = cyclic pyranopterin phosphate + diphosphate. It participates in cofactor biosynthesis; molybdopterin biosynthesis. Its function is as follows. Catalyzes the conversion of (8S)-3',8-cyclo-7,8-dihydroguanosine 5'-triphosphate to cyclic pyranopterin monophosphate (cPMP). The sequence is that of Cyclic pyranopterin monophosphate synthase from Geotalea uraniireducens (strain Rf4) (Geobacter uraniireducens).